The sequence spans 160 residues: Lipoprotein signal peptidase (160 aa).

The next 3 membrane-spanning stretches (helical) occupy residues 6 to 26 (VWSSLFVVILAVLIDQGIKYL), 58 to 78 (LAWLHDGGLIAITLAVIAFVL), and 95 to 115 (FALVIGGAIGNLIDRVMHGYV). Active-site residues include aspartate 117 and aspartate 135. Residues 127 to 147 (SFAVFNLADAFITIGAGLIIL) traverse the membrane as a helical segment.

Belongs to the peptidase A8 family.

Its subcellular location is the cell inner membrane. It catalyses the reaction Release of signal peptides from bacterial membrane prolipoproteins. Hydrolyzes -Xaa-Yaa-Zaa-|-(S,diacylglyceryl)Cys-, in which Xaa is hydrophobic (preferably Leu), and Yaa (Ala or Ser) and Zaa (Gly or Ala) have small, neutral side chains.. The protein operates within protein modification; lipoprotein biosynthesis (signal peptide cleavage). This protein specifically catalyzes the removal of signal peptides from prolipoproteins. The chain is Lipoprotein signal peptidase from Brucella abortus (strain S19).